Consider the following 321-residue polypeptide: Beta-ketoacyl-[acyl-carrier-protein] synthase III (321 aa).

Residues Cys-115 and His-248 contribute to the active site. An ACP-binding region spans residues 249 to 253; it reads QANIR. Residue Asn-278 is part of the active site.

This sequence belongs to the thiolase-like superfamily. FabH family. In terms of assembly, homodimer.

It is found in the cytoplasm. It carries out the reaction malonyl-[ACP] + acetyl-CoA + H(+) = 3-oxobutanoyl-[ACP] + CO2 + CoA. It participates in lipid metabolism; fatty acid biosynthesis. Its function is as follows. Catalyzes the condensation reaction of fatty acid synthesis by the addition to an acyl acceptor of two carbons from malonyl-ACP. Catalyzes the first condensation reaction which initiates fatty acid synthesis and may therefore play a role in governing the total rate of fatty acid production. Possesses both acetoacetyl-ACP synthase and acetyl transacylase activities. Its substrate specificity determines the biosynthesis of branched-chain and/or straight-chain of fatty acids. In Azoarcus sp. (strain BH72), this protein is Beta-ketoacyl-[acyl-carrier-protein] synthase III.